The sequence spans 132 residues: Ribosome-binding factor A (132 aa).

Belongs to the RbfA family. As to quaternary structure, monomer. Binds 30S ribosomal subunits, but not 50S ribosomal subunits or 70S ribosomes.

Its subcellular location is the cytoplasm. One of several proteins that assist in the late maturation steps of the functional core of the 30S ribosomal subunit. Associates with free 30S ribosomal subunits (but not with 30S subunits that are part of 70S ribosomes or polysomes). Required for efficient processing of 16S rRNA. May interact with the 5'-terminal helix region of 16S rRNA. The protein is Ribosome-binding factor A of Burkholderia cenocepacia (strain ATCC BAA-245 / DSM 16553 / LMG 16656 / NCTC 13227 / J2315 / CF5610) (Burkholderia cepacia (strain J2315)).